A 244-amino-acid polypeptide reads, in one-letter code: tRNA (guanine-N(7)-)-methyltransferase (244 aa).

The S-adenosyl-L-methionine site is built by Glu42, Asp67, Asp94, and Asp116. The active site involves Asp116. Substrate contacts are provided by residues Lys120, Asp150, and 191-194; that span reads TYYE.

Belongs to the class I-like SAM-binding methyltransferase superfamily. TrmB family.

It catalyses the reaction guanosine(46) in tRNA + S-adenosyl-L-methionine = N(7)-methylguanosine(46) in tRNA + S-adenosyl-L-homocysteine. Its pathway is tRNA modification; N(7)-methylguanine-tRNA biosynthesis. Functionally, catalyzes the formation of N(7)-methylguanine at position 46 (m7G46) in tRNA. The chain is tRNA (guanine-N(7)-)-methyltransferase from Porphyromonas gingivalis (strain ATCC BAA-308 / W83).